Consider the following 240-residue polypeptide: TATA-box-binding protein (240 aa).

Positions asparagine 21–serine 61 are disordered. Over residues glutamate 44–threonine 57 the composition is skewed to basic and acidic residues. 2 repeat units span residues leucine 67–isoleucine 143 and isoleucine 157–leucine 234.

This sequence belongs to the TBP family. In terms of assembly, binds DNA as monomer. The 1.2 MDa TFIID complex is composed of TATA binding protein (TBP) and the 14 TBP-associated factors. One copy of each TAF1, TAF2, TAF3, TAF7, TAF8, TAF11, TAF13, two copies of each TAF4, TAF5, TAF6, TAF9, TAF10, TAF12, and three copies of TAF14. Interacts with TFC8.

It localises to the nucleus. General transcription factor that functions at the core of the DNA-binding general transcription factor complex TFIID. Binding of TFIID to a promoter (with or without TATA element) is the initial step in preinitiation complex (PIC) formation. TFIID plays a key role in the regulation of gene expression by RNA polymerase II through different activities such as transcription activator interaction, core promoter recognition and selectivity, TFIIA and TFIIB interaction, chromatin modification (histone acetylation by TAF1), facilitation of DNA opening and initiation of transcription. The protein is TATA-box-binding protein (SPT15) of Saccharomyces cerevisiae (strain ATCC 204508 / S288c) (Baker's yeast).